The chain runs to 150 residues: MKVVIQRVSQASVTIDSKIVAKIQKGLLILVGIEDSDNQEDINWLSSKIINLRIFEDKNEVMNLSVKDINGEIIVVSQFTLQALTKKGNRPSYIKASKPEIAIPLYQSFVSQLETELGKKVQTGIFGADMKVSLINDGPVTIIIDSKNKE.

A Gly-cisPro motif, important for rejection of L-amino acids motif is present at residues 138 to 139; that stretch reads GP.

This sequence belongs to the DTD family. Homodimer.

The protein resides in the cytoplasm. It carries out the reaction glycyl-tRNA(Ala) + H2O = tRNA(Ala) + glycine + H(+). The enzyme catalyses a D-aminoacyl-tRNA + H2O = a tRNA + a D-alpha-amino acid + H(+). Its function is as follows. An aminoacyl-tRNA editing enzyme that deacylates mischarged D-aminoacyl-tRNAs. Also deacylates mischarged glycyl-tRNA(Ala), protecting cells against glycine mischarging by AlaRS. Acts via tRNA-based rather than protein-based catalysis; rejects L-amino acids rather than detecting D-amino acids in the active site. By recycling D-aminoacyl-tRNA to D-amino acids and free tRNA molecules, this enzyme counteracts the toxicity associated with the formation of D-aminoacyl-tRNA entities in vivo and helps enforce protein L-homochirality. The chain is D-aminoacyl-tRNA deacylase from Flavobacterium psychrophilum (strain ATCC 49511 / DSM 21280 / CIP 103535 / JIP02/86).